A 135-amino-acid chain; its full sequence is Proteasome assembly chaperone 3 (135 aa).

The protein belongs to the PSMG3 family.

In terms of biological role, chaperone protein which promotes assembly of the 20S proteasome. May cooperate with psmg1-psmg2 heterodimers to orchestrate the correct assembly of proteasomes. This is Proteasome assembly chaperone 3 (psmg3) from Nematostella vectensis (Starlet sea anemone).